The chain runs to 367 residues: Zinc transport system membrane protein TroD (367 aa).

9 helical membrane-spanning segments follow: residues Val-5–Leu-25, Ile-28–Phe-48, Phe-56–Leu-76, Ala-87–Ala-107, Ser-140–Lys-160, Val-170–Val-190, Val-201–Thr-221, Leu-224–Phe-244, and Gly-251–Phe-271.

This sequence belongs to the ABC-3 integral membrane protein family.

Its subcellular location is the cell membrane. Its function is as follows. Part of an ATP-driven transport system TroABCD for zinc. The sequence is that of Zinc transport system membrane protein TroD (troD) from Treponema pallidum (strain Nichols).